A 539-amino-acid polypeptide reads, in one-letter code: Phosphoenolpyruvate carboxykinase (ATP) (539 aa).

R64, Y206, and K212 together coordinate substrate. ATP contacts are provided by residues K212, H231, and 247-255 (GLSGTGKTT). Mn(2+)-binding residues include K212 and H231. Residue D268 participates in Mn(2+) binding. Residues E296, R332, 448 to 449 (RI), and T454 each bind ATP. R332 provides a ligand contact to substrate.

Belongs to the phosphoenolpyruvate carboxykinase (ATP) family. As to quaternary structure, monomer. It depends on Mn(2+) as a cofactor.

It is found in the cytoplasm. The catalysed reaction is oxaloacetate + ATP = phosphoenolpyruvate + ADP + CO2. It functions in the pathway carbohydrate biosynthesis; gluconeogenesis. Its function is as follows. Involved in the gluconeogenesis. Catalyzes the conversion of oxaloacetate (OAA) to phosphoenolpyruvate (PEP) through direct phosphoryl transfer between the nucleoside triphosphate and OAA. The sequence is that of Phosphoenolpyruvate carboxykinase (ATP) from Yersinia enterocolitica serotype O:8 / biotype 1B (strain NCTC 13174 / 8081).